The sequence spans 484 residues: Ribonuclease Y (484 aa).

Residues 18-38 (FFAFLFLIIIAFNLCLFAYLY) form a helical membrane-spanning segment. A KH domain is found at 166–234 (SPSFLISESD…LTVRNILMND (69 aa)). Positions 293 to 385 (VLSHSLETAF…TQIADKLSAA (93 aa)) constitute an HD domain.

The protein belongs to the RNase Y family.

It is found in the cell membrane. In terms of biological role, endoribonuclease that initiates mRNA decay. In Mycoplasma genitalium (strain ATCC 33530 / DSM 19775 / NCTC 10195 / G37) (Mycoplasmoides genitalium), this protein is Ribonuclease Y.